We begin with the raw amino-acid sequence, 387 residues long: Formate-dependent phosphoribosylglycinamide formyltransferase (387 aa).

N(1)-(5-phospho-beta-D-ribosyl)glycinamide is bound by residues 15–16 and Glu75; that span reads EL. ATP-binding positions include Arg106, Lys147, 152–157, 187–190, and Glu195; these read SSGKGQ and EEFI. Residues 111-301 enclose the ATP-grasp domain; the sequence is DLASNELNIR…EFELHLRAVL (191 aa). Glu260 and Glu272 together coordinate Mg(2+). Residues Asp279, Lys349, and 356-357 each bind N(1)-(5-phospho-beta-D-ribosyl)glycinamide; that span reads RR.

It belongs to the PurK/PurT family. In terms of assembly, homodimer.

The enzyme catalyses N(1)-(5-phospho-beta-D-ribosyl)glycinamide + formate + ATP = N(2)-formyl-N(1)-(5-phospho-beta-D-ribosyl)glycinamide + ADP + phosphate + H(+). The protein operates within purine metabolism; IMP biosynthesis via de novo pathway; N(2)-formyl-N(1)-(5-phospho-D-ribosyl)glycinamide from N(1)-(5-phospho-D-ribosyl)glycinamide (formate route): step 1/1. In terms of biological role, involved in the de novo purine biosynthesis. Catalyzes the transfer of formate to 5-phospho-ribosyl-glycinamide (GAR), producing 5-phospho-ribosyl-N-formylglycinamide (FGAR). Formate is provided by PurU via hydrolysis of 10-formyl-tetrahydrofolate. The sequence is that of Formate-dependent phosphoribosylglycinamide formyltransferase from Prochlorococcus marinus (strain NATL1A).